The following is a 711-amino-acid chain: Dendrin (711 aa).

4 disordered regions span residues 1-22 (MLDGPLFSEGPDSPRELQDEES), 49-273 (APSR…KKRL), 324-446 (DLNS…SQGL), and 479-677 (PSGV…AELS). The span at 75 to 84 (PGSPQPPPRR) shows a compositional bias: pro residues. The stretch at 102 to 134 (LAEVRAREQEKRKAASQEREAKETERKRRKAGG) forms a coiled coil. Basic and acidic residues predominate over residues 105–127 (VRAREQEKRKAASQEREAKETER). The segment at 113 to 131 (RKAASQEREAKETERKRRK) is nuclear localization. The segment covering 150 to 161 (APRVAQLAGLPA) has biased composition (low complexity). The interval 186 to 236 (GSAWAGPWGGRRPGPPSYEAHLLLRGSAGTAPRRRWDRPPPYVAPPSYEGP) is interaction with MAGI2. Low complexity-rich tracts occupy residues 252–262 (PTSSAPAATPA) and 346–356 (APAGSATAAPC). The interaction with ACTN1 stretch occupies residues 341 to 436 (AGTEIAPAGS…LEGWKATRRA (96 aa)). Residue Ser389 is modified to Phosphoserine. The tract at residues 408–709 (GGTGWRESLG…IRGTQQGNRK (302 aa)) is interaction with CD2AP and NPHS1. Basic and acidic residues predominate over residues 529-546 (GEAEGGRPGDSTLEERTF).

Forms a ternary complex with MAGI2 and SH3KBP1; recruits DDN to the cytoplasm. Interacts with MAGI1. Interacts with ACTN1 and may interact with WWC1. Interacts with the podocyte slit diaphragm proteins CD2AP, NPHS1 and NPHS2; the interaction with CD2AP and NPHS1 is direct. In terms of tissue distribution, specifically expressed in brain and kidney. Expressed in kidney glomerular capillary loops (at protein level).

The protein localises to the cell projection. Its subcellular location is the dendritic spine membrane. It is found in the cytoplasm. The protein resides in the endoplasmic reticulum membrane. It localises to the perikaryon. The protein localises to the nucleus. Functionally, promotes apoptosis of kidney glomerular podocytes. Podocytes are highly specialized cells essential to the ultrafiltration of blood, resulting in the extraction of urine and the retention of protein. The polypeptide is Dendrin (DDN) (Homo sapiens (Human)).